We begin with the raw amino-acid sequence, 260 residues long: tRNA pseudouridine synthase A (260 aa).

Catalysis depends on Asp-52, which acts as the Nucleophile. A substrate-binding site is contributed by Tyr-111.

It belongs to the tRNA pseudouridine synthase TruA family. Homodimer.

It carries out the reaction uridine(38/39/40) in tRNA = pseudouridine(38/39/40) in tRNA. Functionally, formation of pseudouridine at positions 38, 39 and 40 in the anticodon stem and loop of transfer RNAs. The polypeptide is tRNA pseudouridine synthase A (Roseobacter denitrificans (strain ATCC 33942 / OCh 114) (Erythrobacter sp. (strain OCh 114))).